Consider the following 337-residue polypeptide: uncharacterized protein (337 aa).

The MurNAc-LAA domain occupies 3–174; sequence IAVRGGHNFK…IGKLIAEAIN (172 aa).

The protein to C.perfringens pIP404 ORF10.

This is an uncharacterized protein from Clostridium perfringens (strain 13 / Type A).